The sequence spans 82 residues: Sulfur carrier protein TusA (82 aa).

Cysteine 19 functions as the Cysteine persulfide intermediate in the catalytic mechanism.

Belongs to the sulfur carrier protein TusA family.

It localises to the cytoplasm. In terms of biological role, sulfur carrier protein which probably makes part of a sulfur-relay system. In Vibrio parahaemolyticus serotype O3:K6 (strain RIMD 2210633), this protein is Sulfur carrier protein TusA.